The primary structure comprises 257 residues: MAPITDEAVNGLKDMIGKLEARVQELEGRLVGDLKPKSTAEQMRIILMGPPGAGKGTQAPRLKEKYCVCHLATGDMLRSQVAKKTELGKEAKKIMDQGGLVSDEIMVNMIKSELETNSECKNGFILDGFPRTVAQAERLDDMLEARKQKLQHAVELQIDDALLVARITGRLVHPASGRSYHKIFNPPKNEMLDDITGEPLIQRSDDNAETLKKRLSTYHAQTAPVVDYYKKTGIWRGIDASQEPGQVWKSLLGVFQK.

52–57 (GAGKGT) provides a ligand contact to ATP. The segment at 72–101 (ATGDMLRSQVAKKTELGKEAKKIMDQGGLV) is NMP. Residues Thr-73, Arg-78, 99–101 (GLV), 128–131 (GFPR), and Gln-135 contribute to the AMP site. The interval 169–206 (GRLVHPASGRSYHKIFNPPKNEMLDDITGEPLIQRSDD) is LID. ATP is bound by residues Arg-170 and 179-180 (SY). 2 residues coordinate AMP: Arg-203 and Arg-214. Gln-242 lines the ATP pocket.

This sequence belongs to the adenylate kinase family. AK2 subfamily. As to quaternary structure, monomer.

It is found in the cytoplasm. The protein resides in the cytosol. The protein localises to the mitochondrion intermembrane space. It carries out the reaction AMP + ATP = 2 ADP. Catalyzes the reversible transfer of the terminal phosphate group between ATP and AMP. Plays an important role in cellular energy homeostasis and in adenine nucleotide metabolism. Adenylate kinase activity is critical for regulation of the phosphate utilization and the AMP de novo biosynthesis pathways. This is Adenylate kinase (adk1) from Aspergillus clavatus (strain ATCC 1007 / CBS 513.65 / DSM 816 / NCTC 3887 / NRRL 1 / QM 1276 / 107).